We begin with the raw amino-acid sequence, 445 residues long: Methylthioribose-1-phosphate isomerase (445 aa).

The Proton donor role is filled by D286.

Belongs to the eIF-2B alpha/beta/delta subunits family. MtnA subfamily.

The protein localises to the cytoplasm. It is found in the nucleus. It catalyses the reaction 5-(methylsulfanyl)-alpha-D-ribose 1-phosphate = 5-(methylsulfanyl)-D-ribulose 1-phosphate. The protein operates within amino-acid biosynthesis; L-methionine biosynthesis via salvage pathway; L-methionine from S-methyl-5-thio-alpha-D-ribose 1-phosphate: step 1/6. In terms of biological role, catalyzes the interconversion of methylthioribose-1-phosphate (MTR-1-P) into methylthioribulose-1-phosphate (MTRu-1-P). The sequence is that of Methylthioribose-1-phosphate isomerase (mri1) from Sclerotinia sclerotiorum (strain ATCC 18683 / 1980 / Ss-1) (White mold).